The chain runs to 140 residues: MAFEALLEEQREETRLIIEELLEDGSDPDALYTIEHHLSCNNFDSLEKAAVDAFKLGYEVTEPEELELEDGTTVMCVDILSEGALKAELIDAQVEQLVNLVAKYNVDYDGWGTYFEDPNAQDDDEDDGEAIDEDDNGIRH.

The segment at 115–140 is disordered; it reads FEDPNAQDDDEDDGEAIDEDDNGIRH. Residues 119 to 140 show a composition bias toward acidic residues; sequence NAQDDDEDDGEAIDEDDNGIRH.

Belongs to the RraB family. As to quaternary structure, interacts with the C-terminal region of Rne.

The protein localises to the cytoplasm. Its function is as follows. Globally modulates RNA abundance by binding to RNase E (Rne) and regulating its endonucleolytic activity. Can modulate Rne action in a substrate-dependent manner by altering the composition of the degradosome. This is Regulator of ribonuclease activity B from Pantoea ananatis (strain LMG 20103).